The primary structure comprises 165 residues: Copper-resistant cuproprotein CopI (165 aa).

An N-terminal signal peptide occupies residues Met1–Ala23. The segment covering Ala25–Asp42 has biased composition (basic and acidic residues). The segment at Ala25–Asp50 is disordered. Cu(2+) contacts are provided by His93, Cys148, His153, and Met158.

This sequence belongs to the CopI family. As to quaternary structure, monomer.

It is found in the periplasm. Its function is as follows. Involved in copper tolerance. Required for copper resistance under both aerobic and anaerobic photosynthetic growth conditions. Binds copper. Could be an important defense against copper in the periplasm and may protect not only c type cytochromes but also other proteins with cysteine residues from copper ions that may catalyze nonnative disulfide bond formation. The protein is Copper-resistant cuproprotein CopI of Rubrivivax gelatinosus (Rhodocyclus gelatinosus).